A 219-amino-acid polypeptide reads, in one-letter code: Adenylate kinase (219 aa).

Residue 10-15 (GAGKGT) participates in ATP binding. The NMP stretch occupies residues 30-59 (STGDMLRAAVKAETPVGLEAKKVMDAGQLV). AMP is bound by residues Thr31, Arg36, 57 to 59 (QLV), 85 to 88 (GFPR), and Gln92. Residues 122–159 (GRRVHLSSGRTYHVLFNPPKQEGLDDETGEPLVQRADD) form an LID region. ATP-binding positions include Arg123 and 132–133 (TY). 2 residues coordinate AMP: Arg156 and Arg167. Gly203 lines the ATP pocket.

It belongs to the adenylate kinase family. In terms of assembly, monomer.

It localises to the cytoplasm. The enzyme catalyses AMP + ATP = 2 ADP. Its pathway is purine metabolism; AMP biosynthesis via salvage pathway; AMP from ADP: step 1/1. Catalyzes the reversible transfer of the terminal phosphate group between ATP and AMP. Plays an important role in cellular energy homeostasis and in adenine nucleotide metabolism. This is Adenylate kinase from Chlorobium limicola (strain DSM 245 / NBRC 103803 / 6330).